We begin with the raw amino-acid sequence, 178 residues long: Mediator of RNA polymerase II transcription subunit 28 (178 aa).

The interval 1–44 is disordered; the sequence is MAAPLGGMFSGQPPGPPQAPPGLPGQASLLQAAPGAPRPSSSTL. Residues 13-23 show a composition bias toward pro residues; the sequence is PPGPPQAPPGL. Residues 109–145 are a coiled coil; the sequence is QVIKEDVSELRNELQRKDALVQKHLTKLRHWQQVLED.

It belongs to the Mediator complex subunit 28 family. In terms of assembly, component of the Mediator complex, which is composed of MED1, MED4, MED6, MED7, MED8, MED9, MED10, MED11, MED12, MED13, MED13L, MED14, MED15, MED16, MED17, MED18, MED19, MED20, MED21, MED22, MED23, MED24, MED25, MED26, MED27, MED29, MED30, MED31, CCNC, CDK8 and CDC2L6/CDK11. The MED12, MED13, CCNC and CDK8 subunits form a distinct module termed the CDK8 module. Mediator containing the CDK8 module is less active than Mediator lacking this module in supporting transcriptional activation. Individual preparations of the Mediator complex lacking one or more distinct subunits have been variously termed ARC, CRSP, DRIP, PC2, SMCC and TRAP. Forms a ternary complex with NF2/merlin and GRB2. Binds to actin. Widely expressed. Highly expressed in vascular tissues such as placenta, testis and liver.

Its subcellular location is the nucleus. It is found in the cytoplasm. The protein localises to the membrane. Its function is as follows. Component of the Mediator complex, a coactivator involved in the regulated transcription of nearly all RNA polymerase II-dependent genes. Mediator functions as a bridge to convey information from gene-specific regulatory proteins to the basal RNA polymerase II transcription machinery. Mediator is recruited to promoters by direct interactions with regulatory proteins and serves as a scaffold for the assembly of a functional preinitiation complex with RNA polymerase II and the general transcription factors. May be part of a complex containing NF2/merlin that participates in cellular signaling to the actin cytoskeleton downstream of tyrosine kinase signaling pathways. The polypeptide is Mediator of RNA polymerase II transcription subunit 28 (MED28) (Homo sapiens (Human)).